Here is a 109-residue protein sequence, read N- to C-terminus: Thiosulfate sulfurtransferase GlpE (109 aa).

One can recognise a Rhodanese domain in the interval 16–104; sequence REQGAVVVDV…WRTTFPSETA (89 aa). Residue C64 is the Cysteine persulfide intermediate of the active site.

It belongs to the GlpE family.

Its subcellular location is the cytoplasm. The enzyme catalyses thiosulfate + hydrogen cyanide = thiocyanate + sulfite + 2 H(+). It catalyses the reaction thiosulfate + [thioredoxin]-dithiol = [thioredoxin]-disulfide + hydrogen sulfide + sulfite + 2 H(+). Its function is as follows. Transferase that catalyzes the transfer of sulfur from thiosulfate to thiophilic acceptors such as cyanide or dithiols. May function in a CysM-independent thiosulfate assimilation pathway by catalyzing the conversion of thiosulfate to sulfite, which can then be used for L-cysteine biosynthesis. The protein is Thiosulfate sulfurtransferase GlpE of Pseudomonas fluorescens (strain Pf0-1).